The following is a 459-amino-acid chain: tRNA modification GTPase MnmE (459 aa).

(6S)-5-formyl-5,6,7,8-tetrahydrofolate-binding residues include Arg20, Glu85, and Arg124. A TrmE-type G domain is found at 221 to 380; that stretch reads GISTVIIGRP…LEEAIQSLFF (160 aa). K(+) is bound at residue Asn231. GTP-binding positions include 231–236, 250–256, and 275–278; these read NVGKSS, TDIPGTT, and DTAG. Residue Ser235 participates in Mg(2+) binding. Positions 250, 252, and 255 each coordinate K(+). A Mg(2+)-binding site is contributed by Thr256. (6S)-5-formyl-5,6,7,8-tetrahydrofolate is bound at residue Lys459.

This sequence belongs to the TRAFAC class TrmE-Era-EngA-EngB-Septin-like GTPase superfamily. TrmE GTPase family. Homodimer. Heterotetramer of two MnmE and two MnmG subunits. K(+) serves as cofactor.

The protein resides in the cytoplasm. In terms of biological role, exhibits a very high intrinsic GTPase hydrolysis rate. Involved in the addition of a carboxymethylaminomethyl (cmnm) group at the wobble position (U34) of certain tRNAs, forming tRNA-cmnm(5)s(2)U34. The polypeptide is tRNA modification GTPase MnmE (Bacillus licheniformis (strain ATCC 14580 / DSM 13 / JCM 2505 / CCUG 7422 / NBRC 12200 / NCIMB 9375 / NCTC 10341 / NRRL NRS-1264 / Gibson 46)).